Reading from the N-terminus, the 107-residue chain is Ubiquitin-related modifier 1 (107 aa).

Residue Gly-107 is modified to 1-thioglycine. Gly-107 is covalently cross-linked (Glycyl lysine isopeptide (Gly-Lys) (interchain with K-? in acceptor proteins)).

The protein belongs to the URM1 family. In terms of processing, C-terminal thiocarboxylation occurs in 2 steps, it is first acyl-adenylated (-COAMP) via the hesA/moeB/thiF part of UBA4, then thiocarboxylated (-COSH) via the rhodanese domain of UBA4.

The protein localises to the cytoplasm. It functions in the pathway tRNA modification; 5-methoxycarbonylmethyl-2-thiouridine-tRNA biosynthesis. Functionally, acts as a sulfur carrier required for 2-thiolation of mcm(5)S(2)U at tRNA wobble positions of cytosolic tRNA(Lys), tRNA(Glu) and tRNA(Gln). Serves as sulfur donor in tRNA 2-thiolation reaction by being thiocarboxylated (-COSH) at its C-terminus by the MOCS3 homolog UBA4. The sulfur is then transferred to tRNA to form 2-thiolation of mcm(5)S(2)U. Prior mcm(5) tRNA modification by the elongator complex is required for 2-thiolation. Also acts as a ubiquitin-like protein (UBL) that is covalently conjugated via an isopeptide bond to lysine residues of target proteins such as AHP1. The thiocarboxylated form serves as substrate for conjugation and oxidative stress specifically induces the formation of UBL-protein conjugates. The chain is Ubiquitin-related modifier 1 from Mycosarcoma maydis (Corn smut fungus).